The following is a 652-amino-acid chain: Phosphomethylpyrimidine synthase (652 aa).

Substrate contacts are provided by residues asparagine 235, methionine 264, tyrosine 293, histidine 329, 349 to 351 (SRG), 390 to 393 (DGMR), and glutamate 429. Histidine 433 contacts Zn(2+). Residue tyrosine 456 participates in substrate binding. Histidine 497 lines the Zn(2+) pocket. Positions 577, 580, and 585 each coordinate [4Fe-4S] cluster.

Belongs to the ThiC family. Homodimer. [4Fe-4S] cluster is required as a cofactor.

The catalysed reaction is 5-amino-1-(5-phospho-beta-D-ribosyl)imidazole + S-adenosyl-L-methionine = 4-amino-2-methyl-5-(phosphooxymethyl)pyrimidine + CO + 5'-deoxyadenosine + formate + L-methionine + 3 H(+). Its pathway is cofactor biosynthesis; thiamine diphosphate biosynthesis. In terms of biological role, catalyzes the synthesis of the hydroxymethylpyrimidine phosphate (HMP-P) moiety of thiamine from aminoimidazole ribotide (AIR) in a radical S-adenosyl-L-methionine (SAM)-dependent reaction. This Shewanella sediminis (strain HAW-EB3) protein is Phosphomethylpyrimidine synthase.